Here is a 152-residue protein sequence, read N- to C-terminus: Small ribosomal subunit protein uS5 (152 aa).

Residues 14–77 (FEEVIVNIGR…DDAHKNLVKV (64 aa)) form the S5 DRBM domain.

It belongs to the universal ribosomal protein uS5 family. Part of the 30S ribosomal subunit. Contacts proteins S4 and S8.

Its function is as follows. With S4 and S12 plays an important role in translational accuracy. Located at the back of the 30S subunit body where it stabilizes the conformation of the head with respect to the body. This is Small ribosomal subunit protein uS5 from Sulfurovum sp. (strain NBC37-1).